A 209-amino-acid polypeptide reads, in one-letter code: ATP-dependent Clp protease proteolytic subunit (209 aa).

The active-site Nucleophile is the S101. H126 is an active-site residue.

It belongs to the peptidase S14 family. As to quaternary structure, component of the chloroplastic Clp protease core complex.

It is found in the plastid. The protein resides in the chloroplast stroma. It carries out the reaction Hydrolysis of proteins to small peptides in the presence of ATP and magnesium. alpha-casein is the usual test substrate. In the absence of ATP, only oligopeptides shorter than five residues are hydrolyzed (such as succinyl-Leu-Tyr-|-NHMec, and Leu-Tyr-Leu-|-Tyr-Trp, in which cleavage of the -Tyr-|-Leu- and -Tyr-|-Trp bonds also occurs).. Its function is as follows. Cleaves peptides in various proteins in a process that requires ATP hydrolysis. Has a chymotrypsin-like activity. Plays a major role in the degradation of misfolded proteins. The chain is ATP-dependent Clp protease proteolytic subunit from Huperzia lucidula (Shining clubmoss).